We begin with the raw amino-acid sequence, 157 residues long: Cyclic pyranopterin monophosphate synthase (157 aa).

Substrate-binding positions include 74–76 (MCH) and 112–113 (ME). The active site involves aspartate 127.

It belongs to the MoaC family. In terms of assembly, homohexamer; trimer of dimers.

It catalyses the reaction (8S)-3',8-cyclo-7,8-dihydroguanosine 5'-triphosphate = cyclic pyranopterin phosphate + diphosphate. It participates in cofactor biosynthesis; molybdopterin biosynthesis. In terms of biological role, catalyzes the conversion of (8S)-3',8-cyclo-7,8-dihydroguanosine 5'-triphosphate to cyclic pyranopterin monophosphate (cPMP). The protein is Cyclic pyranopterin monophosphate synthase of Sulfurovum sp. (strain NBC37-1).